The primary structure comprises 32 residues: Cytochrome b6-f complex subunit 8 (32 aa).

Residues 6 to 26 (IVSLAWAALMVVFTFSLSLVV) form a helical membrane-spanning segment.

This sequence belongs to the PetN family. In terms of assembly, the 4 large subunits of the cytochrome b6-f complex are cytochrome b6, subunit IV (17 kDa polypeptide, PetD), cytochrome f and the Rieske protein, while the 4 small subunits are PetG, PetL, PetM and PetN. The complex functions as a dimer.

The protein localises to the plastid. It localises to the chloroplast thylakoid membrane. Functionally, component of the cytochrome b6-f complex, which mediates electron transfer between photosystem II (PSII) and photosystem I (PSI), cyclic electron flow around PSI, and state transitions. The chain is Cytochrome b6-f complex subunit 8 from Illicium oligandrum (Star anise).